Consider the following 658-residue polypeptide: Endoglucanase 3 (658 aa).

The N-terminal stretch at 1-23 is a signal peptide; sequence MQLKNFYPKMSVLGIATVMALTA. The N-palmitoyl cysteine moiety is linked to residue cysteine 24. The S-diacylglycerol cysteine moiety is linked to residue cysteine 24. A propeptide spanning residues 24 to 265 is cleaved from the precursor; it reads CGDENTQALF…TDSLFIDNIY (242 aa). The disordered stretch occupies residues 42 to 83; that stretch reads ENQVPVSSSDMSPTSSDAVIDPTSSSAAVVDPSTLPAEGPIT. Residues 45–58 are compositionally biased toward low complexity; the sequence is VPVSSSDMSPTSSD. The 191-residue stretch at 87 to 277 folds into the CBM11 domain; it reads GLGTLVDDFE…DSSEVEKDQP (191 aa). Residue glutamate 448 is the Proton donor of the active site. Residue glutamate 597 is the Nucleophile of the active site.

Belongs to the glycosyl hydrolase 5 (cellulase A) family. Monomer. Post-translationally, may be a lipoprotein and may be glycosylated.

The protein localises to the membrane. It carries out the reaction Endohydrolysis of (1-&gt;4)-beta-D-glucosidic linkages in cellulose, lichenin and cereal beta-D-glucans.. Functionally, exhibits both endoglucanase and cellobiosidase activities. The chain is Endoglucanase 3 (cel-3) from Fibrobacter succinogenes (strain ATCC 19169 / S85).